We begin with the raw amino-acid sequence, 454 residues long: GA-binding protein alpha chain (454 aa).

Residues 168–251 (AALEGYRKEQ…SHLELLRKYV (84 aa)) form the PNT domain. The disordered stretch occupies residues 295–316 (KVQRSPRISGEDRSSPGNRTGN). Phosphoserine is present on serine 303. The ETS DNA-binding region spans 320-400 (IQLWQFLLEL…QGKRFVYKFV (81 aa)).

This sequence belongs to the ETS family. In terms of assembly, heterotetramer of two alpha and two beta subunits. As to expression, ubiquitous.

Its subcellular location is the nucleus. Functionally, transcription factor capable of interacting with purine rich repeats (GA repeats). Positively regulates transcription of transcriptional repressor Rhit/Zpf13. This Mus musculus (Mouse) protein is GA-binding protein alpha chain (Gabpa).